The sequence spans 884 residues: Formin-like protein 11 (884 aa).

The signal sequence occupies residues 1–18 (MVYFRQIFLMIIVVSLHC). Residues 89–143 (AESASFSPWPAPSPSPFPNGGPIESPAYPPAPPRPIPPHLRRPLPQRTHPLEQPE) form a disordered region. Composition is skewed to pro residues over residues 97 to 107 (WPAPSPSPFPN) and 115 to 126 (AYPPAPPRPIPP). Residues 158–178 (ILVPVVASTASAIGFVVCVVG) form a helical membrane-spanning segment. Disordered stretches follow at residues 307 to 384 (SSDD…FSNK), 416 to 469 (SFPI…APLP), and 512 to 532 (MQSS…GKHL). Residues 329-343 (SNASSASGSVNVGSS) are compositionally biased toward low complexity. Over residues 346–358 (FSEHKLDIPECSR) the composition is skewed to basic and acidic residues. 2 stretches are compositionally biased toward pro residues: residues 367 to 379 (APPP…PPLP) and 425 to 436 (QPRPPPPPPPPQ). Residues 461 to 884 (LGKDGAPLPK…NSPSPLAPFR (424 aa)) form the FH2 domain.

Belongs to the formin-like family. Class-I subfamily.

It is found in the membrane. In terms of biological role, might be involved in the organization and polarity of the actin cytoskeleton. This is Formin-like protein 11 (FH11) from Arabidopsis thaliana (Mouse-ear cress).